The chain runs to 170 residues: Type II secretion system protein H (170 aa).

Residues 1–5 constitute a propeptide, leader sequence; the sequence is MRQRG. Position 6 is an N-methylphenylalanine (Phe-6). A helical transmembrane segment spans residues 6 to 29; that stretch reads FTLLEMMLILLLMGVSAGMVLLAF.

Belongs to the GSP H family. Type II secretion is composed of four main components: the outer membrane complex, the inner membrane complex, the cytoplasmic secretion ATPase and the periplasm-spanning pseudopilus. Interacts with core component PulG. Cleaved by prepilin peptidase. Post-translationally, methylated by prepilin peptidase at the amino group of the N-terminal phenylalanine once the leader sequence is cleaved by prepilin peptidase.

It is found in the cell inner membrane. In terms of biological role, component of the type II secretion system required for the energy-dependent secretion of extracellular factors such as proteases and toxins from the periplasm. Part of the pseudopilus tip complex that is critical for the recognition and binding of secretion substrates. The polypeptide is Type II secretion system protein H (pulH) (Klebsiella pneumoniae).